The sequence spans 295 residues: Small ribosomal subunit protein mS23 (295 aa).

A disordered region spans residues 249 to 295; it reads IGSVVEEEKSQSSLFEDLLSNDNLQSEPEVEQSGQQQQQEQPKQETN. Low complexity predominate over residues 273–289; sequence QSEPEVEQSGQQQQQEQ.

It belongs to the mitochondrion-specific ribosomal protein mS23 family. Component of the mitochondrial small ribosomal subunit (mt-SSU).

It localises to the mitochondrion. In terms of biological role, component of the mitochondrial ribosome (mitoribosome), a dedicated translation machinery responsible for the synthesis of mitochondrial genome-encoded proteins, including at least some of the essential transmembrane subunits of the mitochondrial respiratory chain. The mitoribosomes are attached to the mitochondrial inner membrane and translation products are cotranslationally integrated into the membrane. The protein is Small ribosomal subunit protein mS23 (RSM25) of Candida albicans (strain SC5314 / ATCC MYA-2876) (Yeast).